A 395-amino-acid polypeptide reads, in one-letter code: Syncephapepsin (395 aa).

The N-terminal stretch at 1–19 (MKFSLALLATVALATISQA) is a signal peptide. Residues 20–71 (APVEKQVAGKPFQLVKNPHYQANATRAIFRAEKKYARHTAIPEQGKTIVKSA) constitute a propeptide, activation peptide. The 303-residue stretch at 89–391 (YYATVSVGTP…NQGVPEVQIA (303 aa)) folds into the Peptidase A1 domain. Asp-107 is an active-site residue. A disulfide bridge connects residues Cys-120 and Cys-123. Asp-288 is an active-site residue. The cysteines at positions 322 and 355 are disulfide-linked.

This sequence belongs to the peptidase A1 family. Monomer.

Functionally, hydrolysis of proteins with a broad specificity. Residues recognized to be cleaved were primarily those of trypsin and chymotrypsin and Lys was the most susceptible. The chain is Syncephapepsin (SPSR) from Syncephalastrum racemosum (Filamentous fungus).